The sequence spans 347 residues: Elongation factor Ts (347 aa).

The tract at residues 80–83 (TDFV) is involved in Mg(2+) ion dislocation from EF-Tu.

This sequence belongs to the EF-Ts family.

It localises to the cytoplasm. Its function is as follows. Associates with the EF-Tu.GDP complex and induces the exchange of GDP to GTP. It remains bound to the aminoacyl-tRNA.EF-Tu.GTP complex up to the GTP hydrolysis stage on the ribosome. This Streptococcus sanguinis (strain SK36) protein is Elongation factor Ts.